The chain runs to 524 residues: Germ cell-less protein-like 1 (524 aa).

Residues 1 to 37 (MGALSSRVLRPAGRTEQPEPTPGAGGAARRSDAGEDA) are disordered. The short motif at 47–53 (GRKRKRS) is the Nuclear localization signal element. Positions 63 to 83 (DSETDDDEDEGDEQQRLLNTP) are disordered. Ser-64 carries the post-translational modification Phosphoserine. The span at 65–74 (ETDDDEDEGD) shows a compositional bias: acidic residues. At Thr-66 the chain carries Phosphothreonine. Residues 83–89 (PRRKKLK) carry the Nuclear localization signal motif. The region spanning 106–176 (SDIKICALGE…LYRDDVLIKP (71 aa)) is the BTB domain.

As to quaternary structure, interacts with TMPO-Beta, TSG101 and TFDP2. Interacts with EMD. As to expression, ubiquitously expressed at low levels throughout development and in adult tissues.

It is found in the nucleus matrix. Its function is as follows. Possible function in spermatogenesis. Enhances the degradation of MDM2 and increases the amount of p53 probably by modulating the nucleocytoplasmic transport. The polypeptide is Germ cell-less protein-like 1 (Gmcl1) (Mus musculus (Mouse)).